The following is a 156-amino-acid chain: SsrA-binding protein (156 aa).

The segment at 131 to 156 is disordered; that stretch reads YDKRQTLREQQDKREALRVMRERNRG.

This sequence belongs to the SmpB family.

The protein resides in the cytoplasm. In terms of biological role, required for rescue of stalled ribosomes mediated by trans-translation. Binds to transfer-messenger RNA (tmRNA), required for stable association of tmRNA with ribosomes. tmRNA and SmpB together mimic tRNA shape, replacing the anticodon stem-loop with SmpB. tmRNA is encoded by the ssrA gene; the 2 termini fold to resemble tRNA(Ala) and it encodes a 'tag peptide', a short internal open reading frame. During trans-translation Ala-aminoacylated tmRNA acts like a tRNA, entering the A-site of stalled ribosomes, displacing the stalled mRNA. The ribosome then switches to translate the ORF on the tmRNA; the nascent peptide is terminated with the 'tag peptide' encoded by the tmRNA and targeted for degradation. The ribosome is freed to recommence translation, which seems to be the essential function of trans-translation. This Arthrobacter sp. (strain FB24) protein is SsrA-binding protein.